Reading from the N-terminus, the 1077-residue chain is ATP-dependent helicase HRQ1 (1077 aa).

Residues 299-483 enclose the Helicase ATP-binding domain; that stretch reads INSLHQGENV…DMFGINEVTL (185 aa). 312–319 lines the ATP pocket; sequence TSTSSGKS. A DEAH box motif is present at residues 423-426; that stretch reads DELH. A Helicase C-terminal domain is found at 521–678; it reads ILVQLILNNV…DLVLDFNNIL (158 aa).

The protein belongs to the helicase family. HRQ1 subfamily. As to quaternary structure, forms heptamer rings. Interacts with RAD4. The cofactor is Mg(2+).

It localises to the nucleus. The catalysed reaction is Couples ATP hydrolysis with the unwinding of duplex DNA by translocating in the 3'-5' direction.. It carries out the reaction ATP + H2O = ADP + phosphate + H(+). Helicase with 3'-5' helicase activity involved in genome stability. Functions in the RAD4-dependent nucleotide excision repair (NER) pathway and plays a critical role in DNA interstrand cross-link repair. Unwinds relatively long duplex DNA up to 120-bp and requires a long 3'-tail of at least 70 nucleotides for efficient unwinding of duplex DNA. Activity is significantly stimulated by a preexisting fork structure. Shows both processive helicase and DNA strand annealing activities. Affects telomere length by a non-catalytic mechanism, probably through inhibiting telomerase by competing with it for ssDNA binding. The protein is ATP-dependent helicase HRQ1 of Saccharomyces cerevisiae (strain ATCC 204508 / S288c) (Baker's yeast).